Consider the following 193-residue polypeptide: Imidazoleglycerol-phosphate dehydratase (193 aa).

This sequence belongs to the imidazoleglycerol-phosphate dehydratase family.

Its subcellular location is the cytoplasm. The enzyme catalyses D-erythro-1-(imidazol-4-yl)glycerol 3-phosphate = 3-(imidazol-4-yl)-2-oxopropyl phosphate + H2O. The protein operates within amino-acid biosynthesis; L-histidine biosynthesis; L-histidine from 5-phospho-alpha-D-ribose 1-diphosphate: step 6/9. The chain is Imidazoleglycerol-phosphate dehydratase from Saccharolobus islandicus (strain M.16.27) (Sulfolobus islandicus).